The chain runs to 294 residues: Putative isocitrate dehydrogenase [NAD] subunit-like 4 (294 aa).

The protein belongs to the isocitrate and isopropylmalate dehydrogenases family.

Performs an essential role in the oxidative function of the citric acid cycle. In Arabidopsis thaliana (Mouse-ear cress), this protein is Putative isocitrate dehydrogenase [NAD] subunit-like 4 (IDH4).